The primary structure comprises 534 residues: Cytokinin dehydrogenase 1 (534 aa).

The N-terminal stretch at 1–18 is a signal peptide; the sequence is MAVVYYLLLAGLIACSHA. N-linked (GlcNAc...) asparagine glycosylation is found at Asn52, Asn63, and Asn89. Residues 65 to 245 form the FAD-binding PCMH-type domain; it reads TSALPAAVLY…TRARIAVEPA (181 aa). The FAD site is built by Phe100, Gly102, Arg103, and Gly104. Position 105 is a pros-8alpha-FAD histidine (His105). Residues Ser106 and Gln110 each coordinate FAD. Asn134 carries an N-linked (GlcNAc...) asparagine glycan. FAD contacts are provided by Asp169, Thr174, Ser180, Ile184, and Ile235. Asp169 lines the N(6)-dimethylallyladenine pocket. Asp169 lines the trans-zeatin pocket. N-linked (GlcNAc...) asparagine glycans are attached at residues Asn294, Asn323, and Asn338. Glu381 is a N(6)-dimethylallyladenine binding site. Glu381 contacts trans-zeatin. Asn434 is a glycosylation site (N-linked (GlcNAc...) asparagine). Ser456 provides a ligand contact to trans-zeatin. 3 residues coordinate FAD: Tyr491, Ser527, and Gln530.

It belongs to the oxygen-dependent FAD-linked oxidoreductase family. In terms of assembly, monomer. It depends on FAD as a cofactor. Post-translationally, glycosylated; with approximately 10 hexose residues per site. As to expression, expressed in immature kernels and unpollinated cobs. Weakly expressed in kernels harvested two weeks after anthesis.

It localises to the secreted. The protein resides in the extracellular space. It carries out the reaction N(6)-dimethylallyladenine + A + H2O = 3-methyl-2-butenal + adenine + AH2. With respect to regulation, competitive inhibition by phenylureas. Its function is as follows. Catalyzes the oxidation of cytokinins, a family of N(6)-substituted adenine derivatives that are plant hormones, where the substituent is an isopentenyl group. Cleaves trans-zeatin, N(6)-dimethylallyladenine (isopentenyladenine), isopentenyladenosine, zeatin riboside and cis-zeatin, but not dihydrozeatin, kinetin and benzylaminopurine. The protein is Cytokinin dehydrogenase 1 (CKX1) of Zea mays (Maize).